The chain runs to 1553 residues: ABC-type transporter cctS (1553 aa).

Transmembrane regions (helical) follow at residues 27 to 47 (LIPLTACLASAIACLISYFHA), 90 to 110 (LEVALILAEISIAIFLLIFSG), 114 to 134 (DLTSVFASAVSSIYLLLILFV), and 151 to 171 (SVLYTLQWTCLTAIVHAAILG). Asn-176 is a glycosylation site (N-linked (GlcNAc...) asparagine). The next 5 membrane-spanning stretches (helical) occupy residues 177 to 197 (FTIATLVRFALFTFLCLFHWT), 286 to 306 (LLWQGAWATLNSFAVFVPPVL), 324 to 344 (TAWLYVTGLLVAGIVAGVAGC), 413 to 433 (GYLYLVWITFPVQTAIGTYLL), and 438 to 458 (GISGIVGVALMLGLLPLNILI). An ABC transmembrane type-1 1 domain is found at 293-582 (ATLNSFAVFV…IADAITFLLR (290 aa)). Asn-524 is a glycosylation site (N-linked (GlcNAc...) asparagine). 2 consecutive transmembrane segments (helical) span residues 527-547 (TFFSLPLIVTILTLFFYTVVW) and 550-570 (SMGTAVAFPALVIFSILRIPF). Residue Asn-617 is glycosylated (N-linked (GlcNAc...) asparagine). The ABC transporter 1 domain maps to 635 to 874 (NKRSDIQLTE…GRIDADIMQN (240 aa)). 670–677 (GPSGSGKS) lines the ATP pocket. An N-linked (GlcNAc...) asparagine glycan is attached at Asn-725. A helical membrane pass occupies residues 948 to 970 (WYWVLVLFMFGIQQFISLATNIW). One can recognise an ABC transmembrane type-1 2 domain in the interval 951–1255 (VLVLFMFGIQ…FVQLYAIVQQ (305 aa)). The N-linked (GlcNAc...) asparagine glycan is linked to Asn-992. A helical membrane pass occupies residues 1017-1037 (IYVAICLAYAFFTFARDLIVF). A glycan (N-linked (GlcNAc...) asparagine) is linked at Asn-1085. 4 helical membrane passes run 1086 to 1108 (ISTFSINTLQIAASLVMIIVFIS), 1113 to 1135 (AFLIAAVFICVAYWFVMTIFING), 1204 to 1224 (FLGSLILFFTGAFVVWDLESV), and 1229 to 1249 (AALVLTYAAMFSESIMWFVQL). In terms of domain architecture, ABC transporter 2 spans 1294 to 1533 (VRFDAYTTRY…DDDGIFRRLC (240 aa)). 1328 to 1335 (GRTGAGKS) provides a ligand contact to ATP.

Belongs to the ABC transporter superfamily.

It is found in the membrane. Its pathway is mycotoxin biosynthesis. In terms of biological role, ABC-type transporter; part of the gene cluster that mediates the biosynthesis of the mycotoxin cyclochlorotine, a hepatotoxic and carcinogenic cyclic chlorinated pentapeptide. CctS is essential for the biosynthesis of cyclochlorotine, maybe as a chloride channel that supplies chloride for chlorination by cctP2. This chain is ABC-type transporter cctS, found in Talaromyces islandicus (Penicillium islandicum).